The sequence spans 494 residues: 4-trimethylaminobutyraldehyde dehydrogenase (494 aa).

S2 carries the N-acetylserine; in 4-trimethylaminobutyraldehyde dehydrogenase, N-terminally processed modification. An N6-acetyllysine; alternate modification is found at K30. The residue at position 30 (K30) is an N6-succinyllysine; alternate. K59 carries the post-translational modification N6-succinyllysine. NAD(+) is bound by residues K180 and 232–236; that span reads GSVPT. E254 acts as the Proton acceptor in catalysis. C288 (nucleophile) is an active-site residue. K298 carries the post-translational modification N6-acetyllysine. K303 bears the N6-acetyllysine; alternate mark. K303 is modified (N6-succinyllysine; alternate). K344 carries the N6-acetyllysine modification. E391 contributes to the NAD(+) binding site.

Belongs to the aldehyde dehydrogenase family. Homotetramer. In terms of tissue distribution, detected in brain (at protein level). High expression in adult liver, skeletal muscle, and kidney. Low levels in heart, pancreas, lung and brain. Expressed in all regions of the brain. Expression levels are variable in the different brain areas, with the highest levels in the spinal cord and the lowest in the occipital pole.

The protein localises to the cytoplasm. It localises to the cytosol. The catalysed reaction is 4-(trimethylamino)butanal + NAD(+) + H2O = 4-(trimethylamino)butanoate + NADH + 2 H(+). It catalyses the reaction an aldehyde + NAD(+) + H2O = a carboxylate + NADH + 2 H(+). The enzyme catalyses 4-aminobutanal + NAD(+) + H2O = 4-aminobutanoate + NADH + 2 H(+). It carries out the reaction formaldehyde + NAD(+) + H2O = formate + NADH + 2 H(+). The catalysed reaction is acetaldehyde + NAD(+) + H2O = acetate + NADH + 2 H(+). It catalyses the reaction imidazole-4-acetaldehyde + NAD(+) + H2O = imidazole-4-acetate + NADH + 2 H(+). The enzyme catalyses acrolein + NAD(+) + H2O = acrylate + NADH + 2 H(+). It carries out the reaction (5-hydroxyindol-3-yl)acetaldehyde + NAD(+) + H2O = (5-hydroxyindol-3-yl)acetate + NADH + 2 H(+). The catalysed reaction is 3,4-dihydroxyphenylacetaldehyde + NAD(+) + H2O = 3,4-dihydroxyphenylacetate + NADH + 2 H(+). It catalyses the reaction spermine monoaldehyde + NAD(+) + H2O = N-(2-carboxyethyl)spermidine + NADH + 2 H(+). The enzyme catalyses propanal + NAD(+) + H2O = propanoate + NADH + 2 H(+). It carries out the reaction butanal + NAD(+) + H2O = butanoate + NADH + 2 H(+). The catalysed reaction is pentanal + NAD(+) + H2O = pentanoate + NADH + 2 H(+). It catalyses the reaction hexanal + NAD(+) + H2O = hexanoate + NADH + 2 H(+). It functions in the pathway amine and polyamine biosynthesis; carnitine biosynthesis. In terms of biological role, converts gamma-trimethylaminobutyraldehyde into gamma-butyrobetaine with high efficiency (in vitro). Can catalyze the irreversible oxidation of a broad range of aldehydes to the corresponding acids in an NAD-dependent reaction, but with low efficiency. Catalyzes the oxidation of aldehydes arising from biogenic amines and polyamines. This chain is 4-trimethylaminobutyraldehyde dehydrogenase (ALDH9A1), found in Homo sapiens (Human).